We begin with the raw amino-acid sequence, 437 residues long: UDP-N-acetylmuramoylalanine--D-glutamate ligase (437 aa).

115-121 (GSNGKST) contacts ATP.

This sequence belongs to the MurCDEF family.

Its subcellular location is the cytoplasm. The catalysed reaction is UDP-N-acetyl-alpha-D-muramoyl-L-alanine + D-glutamate + ATP = UDP-N-acetyl-alpha-D-muramoyl-L-alanyl-D-glutamate + ADP + phosphate + H(+). It participates in cell wall biogenesis; peptidoglycan biosynthesis. In terms of biological role, cell wall formation. Catalyzes the addition of glutamate to the nucleotide precursor UDP-N-acetylmuramoyl-L-alanine (UMA). This Vibrio campbellii (strain ATCC BAA-1116) protein is UDP-N-acetylmuramoylalanine--D-glutamate ligase.